The sequence spans 221 residues: GTP-binding nuclear protein Ran2 (221 aa).

In terms of domain architecture, Small GTPase Ran-type spans 10–174 (DYPSFKLVIV…LYLARKLAGD (165 aa)). 21–28 (DGGTGKTT) contributes to the GTP binding site. A switch-I region spans residues 40–48 (KKYEPTIGV). Residues Gly71, 125 to 128 (NKVD), and 153 to 155 (SAK) each bind GTP. The segment at 71-87 (GQEKFGGLRDGYYIHGQ) is switch-II.

The protein belongs to the small GTPase superfamily. Ran family. In terms of assembly, found in a nuclear export complex with RanGTP, exportin and pre-miRNA.

It localises to the nucleus. Its function is as follows. GTP-binding protein involved in nucleocytoplasmic transport. Required for the import of protein into the nucleus and also for RNA export. Involved in chromatin condensation and control of cell cycle. The chain is GTP-binding nuclear protein Ran2 (RAN2) from Solanum lycopersicum (Tomato).